We begin with the raw amino-acid sequence, 706 residues long: Ribosomal RNA large subunit methyltransferase K/L (706 aa).

The region spanning 43–154 is the THUMP domain; sequence LMYQSLLWSR…RDMASVALDL (112 aa).

The protein belongs to the methyltransferase superfamily. RlmKL family.

It is found in the cytoplasm. The enzyme catalyses guanosine(2445) in 23S rRNA + S-adenosyl-L-methionine = N(2)-methylguanosine(2445) in 23S rRNA + S-adenosyl-L-homocysteine + H(+). It carries out the reaction guanosine(2069) in 23S rRNA + S-adenosyl-L-methionine = N(2)-methylguanosine(2069) in 23S rRNA + S-adenosyl-L-homocysteine + H(+). Specifically methylates the guanine in position 2445 (m2G2445) and the guanine in position 2069 (m7G2069) of 23S rRNA. In Yersinia pestis bv. Antiqua (strain Antiqua), this protein is Ribosomal RNA large subunit methyltransferase K/L.